The primary structure comprises 570 residues: MSEKHPGPLVVEGKLTDAERMKLESNYLRGTIAEDLNDGLTGGFKGDNFLLIRFHGMYQQDDRDIRAERAEQKLEPRHAMLLRCRLPGGVITTKQWQAIDKFAGENTIYGSIRLTNRQTFQFHGILKKNVKPVHQMLHSVGLDALATANDMNRNVLCTSNPYESQLHAEAYEWAKKISEHLLPRTRAYAEIWLDQEKVATTDEEPILGQTYLPRKFKTTVVIPPQNDIDLHANDMNFVAIAENGKLVGFNLLVGGGLSIEHGNKKTYARTASEFGYLPLEHTLAVAEAVVTTQRDWGNRTDRKNAKTKYTLERVGVETFKAEVERRAGIKFEPIRPYEFTGRGDRIGWVKGIDDNWHLTLFIENGRILDYPGRPLKTGLLEIAKIHKGDFRITANQNLIIAGVPESEKAKIEKIAKESGLMNAVTPQRENSMACVSFPTCPLAMAEAERFLPSFIDNIDNLMAKHGVSDEHIVMRVTGCPNGCGRAMLAEVGLVGKAPGRYNLHLSGNRIGTRIPRMYKENITEPEILASLDELIGRWAKEREAGEGFGDFTVRAGIIRPVLDPARDLWD.

[4Fe-4S] cluster is bound by residues cysteine 434, cysteine 440, cysteine 479, and cysteine 483. Cysteine 483 contacts siroheme.

The protein belongs to the nitrite and sulfite reductase 4Fe-4S domain family. As to quaternary structure, alpha(8)-beta(8). The alpha component is a flavoprotein, the beta component is a hemoprotein. Siroheme serves as cofactor. It depends on [4Fe-4S] cluster as a cofactor.

The catalysed reaction is hydrogen sulfide + 3 NADP(+) + 3 H2O = sulfite + 3 NADPH + 4 H(+). Its pathway is sulfur metabolism; hydrogen sulfide biosynthesis; hydrogen sulfide from sulfite (NADPH route): step 1/1. Component of the sulfite reductase complex that catalyzes the 6-electron reduction of sulfite to sulfide. This is one of several activities required for the biosynthesis of L-cysteine from sulfate. The sequence is that of Sulfite reductase [NADPH] hemoprotein beta-component from Escherichia coli (strain ATCC 8739 / DSM 1576 / NBRC 3972 / NCIMB 8545 / WDCM 00012 / Crooks).